Here is an 887-residue protein sequence, read N- to C-terminus: Centrobin (887 aa).

Positions 1-34 (MATAAPSPSSPLRPEDLLSDSSEPPGLNQVSSEV) are disordered. A Phosphoserine modification is found at S81. Disordered regions lie at residues 110-153 (MLHT…PSSS), 465-486 (SLRQAASLRDHHRKQLQELSGQ), 566-591 (TLLPPNPQAPLAEPSSPGPLEPEKGE), and 636-695 (LGPP…LPPA). Over residues 113–128 (TSRDTAYRTGSERREE) the composition is skewed to basic and acidic residues. A compositionally biased stretch (polar residues) spans 133–153 (SDSTATLLNTRPLQDLSPSSS). Positions 191–557 (RRKHCERHIQ…LQAMLQAHWE (367 aa)) form a coiled coil. Residues 360–887 (QEHQLKERLQ…SMRSRGGIWR (528 aa)) are required for centrosome localization. Positions 670–680 (TDDHRAERPFP) are enriched in basic and acidic residues. S782 bears the Phosphoserine mark. Positions 824–887 (GTDGQGELVP…SMRSRGGIWR (64 aa)) are disordered. Residues 832 to 849 (VPRRNTDSRLGETTRKEI) show a composition bias toward basic and acidic residues.

Interacts with LYST.

The protein resides in the cytoplasm. It is found in the cytoskeleton. It localises to the microtubule organizing center. The protein localises to the centrosome. Its subcellular location is the centriole. Required for centriole duplication. Inhibition of centriole duplication leading to defects in cytokinesis. The chain is Centrobin (Cntrob) from Mus musculus (Mouse).